The following is a 474-amino-acid chain: Membrane-bound acylglycerophosphatidylinositol O-acyltransferase mboat7 (474 aa).

The Cytoplasmic segment spans residues 1–5 (MSPNE). Residues 6–22 (LTYLAILLGSAPLGFLF) form a helical membrane-spanning segment. Over 23-33 (KNGSPQVKQRG) the chain is Lumenal. Residues 34 to 57 (SAAVGVALTLITCHIHSLHSAITI) form a helical membrane-spanning segment. At 58 to 73 (LGTWLIIKILPRSCHF) the chain is on the cytoplasmic side. Residues 74–93 (PTLGWTFTYLLFFRTITYFD) form a helical membrane-spanning segment. Residues 94–193 (IPAPTPFTNA…IPSWKPLVSR (100 aa)) are Lumenal-facing. The helical transmembrane segment at 194 to 211 (LKPAPVFGVLFLIASQYF) threads the bilayer. Residues 212-230 (PLDYVKTDEFYEQAFLYRL) are Cytoplasmic-facing. The helical transmembrane segment at 231 to 260 (FYMVPTFFIFRMRFYVAWIFAECGCISAAF) threads the bilayer. Residues 261-427 (GAYPVSAKSR…LTFTDTYRYW (167 aa)) are Lumenal-facing. Residue N322 is glycosylated (N-linked (GlcNAc...) asparagine). Residues 428–448 (QSIYFSVHVLAISLFLLGRVL) traverse the membrane as a helical segment. Topologically, residues 449–473 (ALKSPRRPRNTKEEKAEAKQENRLQ) are cytoplasmic.

This sequence belongs to the membrane-bound acyltransferase family.

The protein localises to the endoplasmic reticulum membrane. It catalyses the reaction a 1-acyl-sn-glycero-3-phospho-(1D-myo-inositol) + (5Z,8Z,11Z,14Z)-eicosatetraenoyl-CoA = a 1-acyl-2-(5Z,8Z,11Z,14Z-eicosatetraenoyl)-sn-glycero-3-phospho-(1D-myo-inositol) + CoA. The enzyme catalyses (5Z,8Z,11Z,14Z)-eicosatetraenoyl-CoA + 1-hexadecanoyl-sn-glycero-3-phosphocholine = 1-hexadecanoyl-2-(5Z,8Z,11Z,14Z-eicosatetraenoyl)-sn-glycero-3-phosphocholine + CoA. The catalysed reaction is a 1-acyl-sn-glycero-3-phospho-(1D-myo-inositol) + an acyl-CoA = a 1,2-diacyl-sn-glycero-3-phospho-(1D-myo-inositol) + CoA. It carries out the reaction 1-octadecanoyl-sn-glycero-3-phospho-(1D-myo-inositol) + (5Z,8Z,11Z,14Z)-eicosatetraenoyl-CoA = 1-octadecanoyl-2-(5Z,8Z,11Z,14Z-eicosatetraenoyl)-sn-glycero-3-phospho-(1D-myo-inositol) + CoA. It functions in the pathway lipid metabolism; phospholipid metabolism. In terms of biological role, acyltransferase which catalyzes the transfer of an acyl group from an acyl-CoA to a lysophosphatidylinositol (1-acylglycerophosphatidylinositol or LPI) leading to the production of a phosphatidylinositol (1,2-diacyl-sn-glycero-3-phosphoinositol or PI) and participates in the reacylation step of the phospholipid remodeling pathway also known as the Lands cycle. Prefers arachidonoyl-CoA as the acyl donor, thus contributing to the regulation of free levels arachidonic acid in cell. This Xenopus laevis (African clawed frog) protein is Membrane-bound acylglycerophosphatidylinositol O-acyltransferase mboat7 (mboat7).